The chain runs to 327 residues: Methionyl-tRNA formyltransferase (327 aa).

(6S)-5,6,7,8-tetrahydrofolate is bound at residue 121 to 124; that stretch reads SLLP.

This sequence belongs to the Fmt family.

It catalyses the reaction L-methionyl-tRNA(fMet) + (6R)-10-formyltetrahydrofolate = N-formyl-L-methionyl-tRNA(fMet) + (6S)-5,6,7,8-tetrahydrofolate + H(+). In terms of biological role, attaches a formyl group to the free amino group of methionyl-tRNA(fMet). The formyl group appears to play a dual role in the initiator identity of N-formylmethionyl-tRNA by promoting its recognition by IF2 and preventing the misappropriation of this tRNA by the elongation apparatus. This chain is Methionyl-tRNA formyltransferase, found in Burkholderia ambifaria (strain MC40-6).